The following is a 266-amino-acid chain: Tryptophan synthase alpha chain (266 aa).

Active-site proton acceptor residues include Glu-49 and Asp-60.

This sequence belongs to the TrpA family. Tetramer of two alpha and two beta chains.

The catalysed reaction is (1S,2R)-1-C-(indol-3-yl)glycerol 3-phosphate + L-serine = D-glyceraldehyde 3-phosphate + L-tryptophan + H2O. Its pathway is amino-acid biosynthesis; L-tryptophan biosynthesis; L-tryptophan from chorismate: step 5/5. Its function is as follows. The alpha subunit is responsible for the aldol cleavage of indoleglycerol phosphate to indole and glyceraldehyde 3-phosphate. This is Tryptophan synthase alpha chain from Synechococcus elongatus (strain ATCC 33912 / PCC 7942 / FACHB-805) (Anacystis nidulans R2).